Consider the following 972-residue polypeptide: Leucine--tRNA ligase (972 aa).

The 'HIGH' region motif lies at 78-89 (PYPSGDGLHVGH). Residues 741–745 (KIGKS) carry the 'KMSKS' region motif. K744 contributes to the ATP binding site.

The protein belongs to the class-I aminoacyl-tRNA synthetase family.

It is found in the cytoplasm. It catalyses the reaction tRNA(Leu) + L-leucine + ATP = L-leucyl-tRNA(Leu) + AMP + diphosphate. The chain is Leucine--tRNA ligase from Mycobacterium leprae (strain Br4923).